The following is a 277-amino-acid chain: Lectin 1 (277 aa).

Residues 1-30 form the signal peptide; sequence MSFSSSNFYVILSISLTVFILLFNINKVNS. A glycan (N-linked (GlcNAc...) asparagine) is linked at asparagine 143. 2 residues coordinate Mn(2+): glutamate 152 and aspartate 154. Ca(2+)-binding residues include aspartate 154, asparagine 158, and aspartate 161. Residues aspartate 161 and histidine 167 each contribute to the Mn(2+) site. N-linked (GlcNAc...) asparagine glycosylation is present at asparagine 269.

This sequence belongs to the leguminous lectin family.

Lectin that may be involved in a cell recognition process. The sequence is that of Lectin 1 (LEC1) from Medicago truncatula (Barrel medic).